The following is a 374-amino-acid chain: DNA replication and repair protein RecF (374 aa).

Residue 30–37 (GENAQGKT) coordinates ATP.

This sequence belongs to the RecF family.

Its subcellular location is the cytoplasm. In terms of biological role, the RecF protein is involved in DNA metabolism; it is required for DNA replication and normal SOS inducibility. RecF binds preferentially to single-stranded, linear DNA. It also seems to bind ATP. The sequence is that of DNA replication and repair protein RecF from Geobacillus sp. (strain WCH70).